The following is a 232-amino-acid chain: Uracil-DNA glycosylase (232 aa).

Residue Asp64 is the Proton acceptor of the active site.

The protein belongs to the uracil-DNA glycosylase (UDG) superfamily. UNG family.

The protein resides in the cytoplasm. The catalysed reaction is Hydrolyzes single-stranded DNA or mismatched double-stranded DNA and polynucleotides, releasing free uracil.. Its function is as follows. Excises uracil residues from the DNA which can arise as a result of misincorporation of dUMP residues by DNA polymerase or due to deamination of cytosine. This Shouchella clausii (strain KSM-K16) (Alkalihalobacillus clausii) protein is Uracil-DNA glycosylase.